The following is an 847-amino-acid chain: Protein HIR2 (847 aa).

5 WD repeats span residues 10–46, 113–153, 155–194, 259–305, and 309–348; these read LHDG…NAAT, KDNE…LKSS, ELKS…TTKL, KFSP…PLFD, and VVNS…LGDV. A disordered region spans residues 368–399; that stretch reads PFKPKAEEPDTKLPPNKTAQQTTTNSKKQPKA. A compositionally biased stretch (polar residues) spans 384–394; that stretch reads KTAQQTTTNSK. WD repeat units follow at residues 508–548 and 558–597; these read RKDN…IYVT and PMLL…IAFP.

It belongs to the WD repeat HIR1 family.

The protein resides in the nucleus. Required for replication-independent chromatin assembly and for the periodic repression of histone gene transcription during the cell cycle. The polypeptide is Protein HIR2 (HIR2) (Kluyveromyces lactis (strain ATCC 8585 / CBS 2359 / DSM 70799 / NBRC 1267 / NRRL Y-1140 / WM37) (Yeast)).